Here is a 440-residue protein sequence, read N- to C-terminus: tRNA(Ile)-lysidine synthase (440 aa).

31–36 (SGGADS) is an ATP binding site.

The protein belongs to the tRNA(Ile)-lysidine synthase family.

It is found in the cytoplasm. The enzyme catalyses cytidine(34) in tRNA(Ile2) + L-lysine + ATP = lysidine(34) in tRNA(Ile2) + AMP + diphosphate + H(+). Functionally, ligates lysine onto the cytidine present at position 34 of the AUA codon-specific tRNA(Ile) that contains the anticodon CAU, in an ATP-dependent manner. Cytidine is converted to lysidine, thus changing the amino acid specificity of the tRNA from methionine to isoleucine. The chain is tRNA(Ile)-lysidine synthase from Borreliella afzelii (strain PKo) (Borrelia afzelii).